A 177-amino-acid chain; its full sequence is Small ribosomal subunit protein bS21m (177 aa).

The N-terminal 17 residues, 1–17 (MLKSTLRLSRISLRRGF), are a transit peptide targeting the mitochondrion.

The protein belongs to the bacterial ribosomal protein bS21 family. As to quaternary structure, component of the mitochondrial small ribosomal subunit (mt-SSU). Mature yeast 74S mitochondrial ribosomes consist of a small (37S) and a large (54S) subunit. The 37S small subunit contains a 15S ribosomal RNA (15S mt-rRNA) and 34 different proteins. The 54S large subunit contains a 21S rRNA (21S mt-rRNA) and 46 different proteins.

It is found in the mitochondrion. Its function is as follows. Component of the mitochondrial ribosome (mitoribosome), a dedicated translation machinery responsible for the synthesis of mitochondrial genome-encoded proteins, including at least some of the essential transmembrane subunits of the mitochondrial respiratory chain. The mitoribosomes are attached to the mitochondrial inner membrane and translation products are cotranslationally integrated into the membrane. In Saccharomyces cerevisiae (strain ATCC 204508 / S288c) (Baker's yeast), this protein is Small ribosomal subunit protein bS21m (MRP21).